The following is a 127-amino-acid chain: Adult-specific rigid cuticular protein 12.6 (127 aa).

Positions 9 to 87 (GPAYNFGYNT…ALAALAPKAP (79 aa)) constitute a Chitin-binding type R&amp;R domain.

Functionally, component of the rigid cuticle of the spider. In Araneus diadematus (European garden spider), this protein is Adult-specific rigid cuticular protein 12.6.